The chain runs to 277 residues: Protein HEAT-INDUCED TAS1 TARGET 1 (277 aa).

This sequence belongs to the heat induced plant HTT protein family. As to quaternary structure, interacts with the heat shock proteins HSP70-14 and At2g33735/HSP40, and with NFYC2 in both cytoplasm and nucleus. As to expression, expressed ubiquitously, including in seedlings, leaves, stems, inflorescences and siliques.

It is found in the cytoplasm. Its subcellular location is the nucleus. Mediates both basal and acquired thermotolerance via HSFA1s-directed pathways (e.g. HSFA1A, HSFA1B, and HSFA1D). Triggers the expression of HSFA1A and HSFA1B. This Arabidopsis thaliana (Mouse-ear cress) protein is Protein HEAT-INDUCED TAS1 TARGET 1.